The sequence spans 367 residues: Spermidine/putrescine import ATP-binding protein PotA (367 aa).

The ABC transporter domain occupies 10 to 240 (IEFKNVSLDY…PINHFVANFI (231 aa)). 42–49 (GPSGSGKS) lines the ATP pocket.

The protein belongs to the ABC transporter superfamily. Spermidine/putrescine importer (TC 3.A.1.11.1) family. In terms of assembly, the complex is composed of two ATP-binding proteins (PotA), two transmembrane proteins (PotB and PotC) and a solute-binding protein (PotD).

It localises to the cell membrane. The catalysed reaction is ATP + H2O + polyamine-[polyamine-binding protein]Side 1 = ADP + phosphate + polyamineSide 2 + [polyamine-binding protein]Side 1.. In terms of biological role, part of the ABC transporter complex PotABCD involved in spermidine/putrescine import. Responsible for energy coupling to the transport system. In Oenococcus oeni (strain ATCC BAA-331 / PSU-1), this protein is Spermidine/putrescine import ATP-binding protein PotA.